Reading from the N-terminus, the 334-residue chain is Holliday junction branch migration complex subunit RuvB (334 aa).

Residues 1-182 (MNERMVDQSM…FGVHLRLEYY (182 aa)) form a large ATPase domain (RuvB-L) region. Residues leucine 21, arginine 22, glycine 63, lysine 66, threonine 67, threonine 68, 129–131 (EDF), arginine 172, tyrosine 182, and arginine 219 each bind ATP. Threonine 67 contributes to the Mg(2+) binding site. The interval 183–253 (NESDLKEIII…TTKHALGLLQ (71 aa)) is small ATPAse domain (RuvB-S). The tract at residues 256-334 (QHGLDYIDHK…HFAKSNEERE (79 aa)) is head domain (RuvB-H). Arginine 292, arginine 311, and arginine 316 together coordinate DNA.

Belongs to the RuvB family. Homohexamer. Forms an RuvA(8)-RuvB(12)-Holliday junction (HJ) complex. HJ DNA is sandwiched between 2 RuvA tetramers; dsDNA enters through RuvA and exits via RuvB. An RuvB hexamer assembles on each DNA strand where it exits the tetramer. Each RuvB hexamer is contacted by two RuvA subunits (via domain III) on 2 adjacent RuvB subunits; this complex drives branch migration. In the full resolvosome a probable DNA-RuvA(4)-RuvB(12)-RuvC(2) complex forms which resolves the HJ.

Its subcellular location is the cytoplasm. The catalysed reaction is ATP + H2O = ADP + phosphate + H(+). Functionally, the RuvA-RuvB-RuvC complex processes Holliday junction (HJ) DNA during genetic recombination and DNA repair, while the RuvA-RuvB complex plays an important role in the rescue of blocked DNA replication forks via replication fork reversal (RFR). RuvA specifically binds to HJ cruciform DNA, conferring on it an open structure. The RuvB hexamer acts as an ATP-dependent pump, pulling dsDNA into and through the RuvAB complex. RuvB forms 2 homohexamers on either side of HJ DNA bound by 1 or 2 RuvA tetramers; 4 subunits per hexamer contact DNA at a time. Coordinated motions by a converter formed by DNA-disengaged RuvB subunits stimulates ATP hydrolysis and nucleotide exchange. Immobilization of the converter enables RuvB to convert the ATP-contained energy into a lever motion, pulling 2 nucleotides of DNA out of the RuvA tetramer per ATP hydrolyzed, thus driving DNA branch migration. The RuvB motors rotate together with the DNA substrate, which together with the progressing nucleotide cycle form the mechanistic basis for DNA recombination by continuous HJ branch migration. Branch migration allows RuvC to scan DNA until it finds its consensus sequence, where it cleaves and resolves cruciform DNA. The sequence is that of Holliday junction branch migration complex subunit RuvB from Staphylococcus aureus (strain bovine RF122 / ET3-1).